Consider the following 329-residue polypeptide: Ketol-acid reductoisomerase (NADP(+)) (329 aa).

A KARI N-terminal Rossmann domain is found at 2 to 182 (TQLFYDTDAD…GGTRAGILET (181 aa)). Residues 25–28 (YGSQ), Ser51, Ser53, and 83–86 (DEFQ) contribute to the NADP(+) site. Residue His108 is part of the active site. NADP(+) is bound at residue Gly134. A KARI C-terminal knotted domain is found at 183 to 328 (NFKEETETDL…KGLRAMFSWL (146 aa)). Mg(2+) contacts are provided by Asp191, Glu195, Glu227, and Glu231. Ser252 is a binding site for substrate.

Belongs to the ketol-acid reductoisomerase family. It depends on Mg(2+) as a cofactor.

The catalysed reaction is (2R)-2,3-dihydroxy-3-methylbutanoate + NADP(+) = (2S)-2-acetolactate + NADPH + H(+). The enzyme catalyses (2R,3R)-2,3-dihydroxy-3-methylpentanoate + NADP(+) = (S)-2-ethyl-2-hydroxy-3-oxobutanoate + NADPH + H(+). It participates in amino-acid biosynthesis; L-isoleucine biosynthesis; L-isoleucine from 2-oxobutanoate: step 2/4. Its pathway is amino-acid biosynthesis; L-valine biosynthesis; L-valine from pyruvate: step 2/4. Its function is as follows. Involved in the biosynthesis of branched-chain amino acids (BCAA). Catalyzes an alkyl-migration followed by a ketol-acid reduction of (S)-2-acetolactate (S2AL) to yield (R)-2,3-dihydroxy-isovalerate. In the isomerase reaction, S2AL is rearranged via a Mg-dependent methyl migration to produce 3-hydroxy-3-methyl-2-ketobutyrate (HMKB). In the reductase reaction, this 2-ketoacid undergoes a metal-dependent reduction by NADPH to yield (R)-2,3-dihydroxy-isovalerate. This is Ketol-acid reductoisomerase (NADP(+)) from Prochlorococcus marinus (strain MIT 9515).